The chain runs to 1117 residues: DNA-directed RNA polymerase subunit beta (1117 aa).

The disordered stretch occupies residues 1094–1117; it reads QLARRTPPRPTYESLSRESLDDDE. Positions 1108 to 1117 are enriched in basic and acidic residues; that stretch reads LSRESLDDDE.

It belongs to the RNA polymerase beta chain family. In cyanobacteria the RNAP catalytic core is composed of 2 alpha, 1 beta, 1 beta', 1 gamma and 1 omega subunit. When a sigma factor is associated with the core the holoenzyme is formed, which can initiate transcription.

The enzyme catalyses RNA(n) + a ribonucleoside 5'-triphosphate = RNA(n+1) + diphosphate. DNA-dependent RNA polymerase catalyzes the transcription of DNA into RNA using the four ribonucleoside triphosphates as substrates. The chain is DNA-directed RNA polymerase subunit beta from Trichormus variabilis (strain ATCC 29413 / PCC 7937) (Anabaena variabilis).